The following is a 180-amino-acid chain: Shikimate kinase (180 aa).

14 to 19 serves as a coordination point for ATP; sequence GAGKST. A Mg(2+)-binding site is contributed by Ser18. Residues Asp36, Arg60, and Gly82 each coordinate substrate. Position 120 (Arg120) interacts with ATP. Arg140 serves as a coordination point for substrate. Position 157 (Gln157) interacts with ATP.

Belongs to the shikimate kinase family. In terms of assembly, monomer. Requires Mg(2+) as cofactor.

Its subcellular location is the cytoplasm. It carries out the reaction shikimate + ATP = 3-phosphoshikimate + ADP + H(+). It participates in metabolic intermediate biosynthesis; chorismate biosynthesis; chorismate from D-erythrose 4-phosphate and phosphoenolpyruvate: step 5/7. Functionally, catalyzes the specific phosphorylation of the 3-hydroxyl group of shikimic acid using ATP as a cosubstrate. The sequence is that of Shikimate kinase from Haemophilus influenzae (strain PittEE).